The sequence spans 357 residues: SUN domain-containing protein 3 (357 aa).

At 1 to 47 the chain is on the nuclear side; that stretch reads MSGKTKARRAAMFFRRCSEDASGSASGNALLSEDENPDANGVTRSWK. The helical transmembrane segment at 48 to 64 threads the bilayer; that stretch reads IILSTMLTLTFLLVGLL. Over 65-357 the chain is Perinuclear space; sequence NHQWLKETDV…RVHGTPGKHI (293 aa). Positions 98 to 146 form a coiled coil; it reads RLRMPKEQLELLKKESQNLENNFRQILFLIEQIDVLKALLRDMKDGMDN. The region spanning 193-354 is the SUN domain; that stretch reads GASIIEAGTS…YRFRVHGTPG (162 aa).

In terms of assembly, self-associates. Interacts with SYNE1 and SPAG4/SUN4. Proposed to form a spermatogenesis-specific LINC complex with SYNE1 during sperm head formation possibly implicating a SUN domain-based heterotrimer with SPAG4/SUN4 associating with SYNE1.

It localises to the membrane. The protein localises to the nucleus envelope. It is found in the nucleus inner membrane. Its function is as follows. As a probable component of the LINC (LInker of Nucleoskeleton and Cytoskeleton) complex, involved in the connection between the nuclear lamina and the cytoskeleton. The nucleocytoplasmic interactions established by the LINC complex play an important role in the transmission of mechanical forces across the nuclear envelope and in nuclear movement and positioning. May be involved in nuclear remodeling during sperm head formation in spermatogenesis. A probable SUN3:SYNE1 LINC complex may tether spermatid nuclei to posterior cytoskeletal structures such as the manchette. The chain is SUN domain-containing protein 3 (SUN3) from Homo sapiens (Human).